Here is a 234-residue protein sequence, read N- to C-terminus: Proteasome subunit alpha type-2 (234 aa).

At A2 the chain carries N-acetylalanine. Phosphotyrosine is present on Y6. Residues S7, S14, and S16 each carry the phosphoserine modification. Phosphotyrosine is present on Y24. K70 bears the N6-acetyllysine mark. Y76 and Y121 each carry phosphotyrosine. Position 171 is an N6-acetyllysine (K171).

The protein belongs to the peptidase T1A family. As to quaternary structure, the 26S proteasome consists of a 20S proteasome core and two 19S regulatory subunits. The 20S proteasome core is a barrel-shaped complex made of 28 subunits that are arranged in four stacked rings. The two outer rings are each formed by seven alpha subunits, and the two inner rings are formed by seven beta subunits. The proteolytic activity is exerted by three beta-subunits PSMB5, PSMB6 and PSMB7. In terms of processing, phosphorylated on tyrosine residues; which may be important for nuclear import.

The protein localises to the cytoplasm. It is found in the nucleus. Component of the 20S core proteasome complex involved in the proteolytic degradation of most intracellular proteins. This complex plays numerous essential roles within the cell by associating with different regulatory particles. Associated with two 19S regulatory particles, forms the 26S proteasome and thus participates in the ATP-dependent degradation of ubiquitinated proteins. The 26S proteasome plays a key role in the maintenance of protein homeostasis by removing misfolded or damaged proteins that could impair cellular functions, and by removing proteins whose functions are no longer required. Associated with the PA200 or PA28, the 20S proteasome mediates ubiquitin-independent protein degradation. This type of proteolysis is required in several pathways including spermatogenesis (20S-PA200 complex) or generation of a subset of MHC class I-presented antigenic peptides (20S-PA28 complex). This is Proteasome subunit alpha type-2 (PSMA2) from Bos taurus (Bovine).